Here is a 127-residue protein sequence, read N- to C-terminus: Alkaline proteinase inhibitor (127 aa).

The signal sequence occupies residues 1-26; the sequence is MNINYFVRIVPVAVVLLVGISGASMA. Cys-53 and Cys-70 are oxidised to a cystine.

It belongs to the protease inhibitor I38 family.

The protein resides in the periplasm. In terms of biological role, inhibitor of the alkaline protease. This chain is Alkaline proteinase inhibitor (inh), found in Pseudomonas syringae pv. tomato (strain ATCC BAA-871 / DC3000).